The sequence spans 666 residues: N-acetylgalactosaminyltransferase 6 (666 aa).

The Cytoplasmic portion of the chain corresponds to methionine 1 to lysine 11. Residues alanine 12–serine 31 form a helical; Signal-anchor for type II membrane protein membrane-spanning segment. Over serine 32–leucine 666 the chain is Lumenal. Residues glutamate 90–lysine 126 are disordered. The segment covering glutamine 107 to alanine 120 has biased composition (low complexity). The N-linked (GlcNAc...) asparagine glycan is linked to asparagine 181. 5 disulfide bridges follow: cysteine 192–cysteine 421, cysteine 412–cysteine 491, cysteine 531–cysteine 548, cysteine 577–cysteine 594, and cysteine 621–cysteine 636. The interval leucine 201–proline 311 is catalytic subdomain A. Residues aspartate 242 and arginine 272 each contribute to the substrate site. N-linked (GlcNAc...) asparagine glycosylation occurs at asparagine 285. Mn(2+) is bound at residue aspartate 295. Residue serine 296 participates in substrate binding. Histidine 297 is a binding site for Mn(2+). The catalytic subdomain B stretch occupies residues proline 367–arginine 429. Tryptophan 398 lines the substrate pocket. A Mn(2+)-binding site is contributed by histidine 426. Residue arginine 429 coordinates substrate. One can recognise a Ricin B-type lectin domain in the interval alanine 518–glycine 648. 2 N-linked (GlcNAc...) asparagine glycosylation sites follow: asparagine 651 and asparagine 657.

The protein belongs to the glycosyltransferase 2 family. GalNAc-T subfamily. Mn(2+) is required as a cofactor. In terms of tissue distribution, expressed during oogenesis, in the somatically derived follicle cells that surround the developing oocyte, which are involved in the maturation of the oocyte and construction of the egg shell, as well as playing a role in subsequent embryonic pattern formation. Expressed in the salivary glands from embryonic stage 12 onwards, becoming stronger at stage 13. During embryonic stages 12-13, also expressed in the posterior midgut and hindgut. During embryonic stages 14-15, expression continues in the hindgut. Expression is detected in the epidermis and antennomaxillary complex during embryonic stages 16-17. In third instar larvae, ubiquitously expressed in wing, eye-antennal, leg and haltere imaginal disks.

It is found in the golgi apparatus membrane. The catalysed reaction is L-seryl-[protein] + UDP-N-acetyl-alpha-D-galactosamine = a 3-O-[N-acetyl-alpha-D-galactosaminyl]-L-seryl-[protein] + UDP + H(+). It catalyses the reaction L-threonyl-[protein] + UDP-N-acetyl-alpha-D-galactosamine = a 3-O-[N-acetyl-alpha-D-galactosaminyl]-L-threonyl-[protein] + UDP + H(+). It functions in the pathway protein modification; protein glycosylation. Its function is as follows. Glycopeptide transferase involved in O-linked oligosaccharide biosynthesis, which catalyzes the transfer of an N-acetyl-D-galactosamine residue to an already glycosylated peptide. In contrast to other proteins of the family, it does not act as a peptide transferase that transfers GalNAc onto serine or threonine residue on the protein receptor, but instead requires the prior addition of a GalNAc on a peptide before adding additional GalNAc moieties. Some peptide transferase activity is however not excluded, considering that its appropriate peptide substrate may remain unidentified. Prefers the diglycosylated Muc5AC-3/13 as substrate. Might have a role in protein O-glycosylation in the Golgi and thereby in establishing and/or maintaining a proper secretory apparatus structure. The protein is N-acetylgalactosaminyltransferase 6 of Drosophila melanogaster (Fruit fly).